The following is a 271-amino-acid chain: Protein phosphatase 1 regulatory subunit 3B-B (271 aa).

The PP1-binding motif signature appears at 56-59 (RVSF). In terms of domain architecture, CBM21 spans 119 to 227 (RNRLKADSVC…SNKGLNYRIV (109 aa)).

As to quaternary structure, interacts with glycogen, PPP1CC catalytic subunit of PP1 and PYGL. Associates with glycogen particles. Forms complexes with debranching enzyme, glycogen phosphorylase, glycogen synthase and phosphorylase kinase which is necessary for its regulation of PP1 activity.

Its function is as follows. Acts as a glycogen-targeting subunit for phosphatase PP1. Facilitates interaction of the PP1 with enzymes of the glycogen metabolism and regulates its activity. Suppresses the rate at which PP1 dephosphorylates (inactivates) glycogen phosphorylase and enhances the rate at which it activates glycogen synthase and therefore limits glycogen breakdown. The chain is Protein phosphatase 1 regulatory subunit 3B-B (ppp1r3b-b) from Xenopus laevis (African clawed frog).